The primary structure comprises 447 residues: MYRVAIVGRPNVGKSSLFNRIIGKRKAIVEDIPGVTRDRIVSTAEWRGVTFEVVDTGGYIESDKDTFAPYIRKQIEKELELSDAFILVVDGKEGLTPADKEIARILHRTDKPVYVAVNKIDNPEMEKAIYEFYELGFEKVFPVSSIQKYGVADLLDAVVQDIPEYEREASKEVGEKEEKSDVIKVAIVGKPNAGKSSLLNAILGEERAVVSEIPGTTRDVVDTLFEWKDQKFLFLDTAGLRKKSKVDYGIEFFSIGRTLDAIKKADVIVHVIDAQQGATEQDTKIAHLIQKYTKPAVIVINKIDTVPPKSEVLNRIKNQVRERLYFIPYAPIVMTSAKNRKGIKQLLKEITDVYNQSWKRVGTGQLNRAIKQILSLRQPPSYHGKPLKIYYATQLEGKPPCFLLFVNHPEGFKEHFLRFLENNLRTVLGFEKAPIKLLLRGKEERRD.

EngA-type G domains lie at 2-166 (YRVA…PEYE) and 183-358 (IKVA…NQSW). GTP-binding positions include 8–15 (GRPNVGKS), 55–59 (DTGGY), 118–121 (NKID), 189–196 (GKPNAGKS), 236–240 (DTAGL), and 301–304 (NKID). Residues 359 to 443 (KRVGTGQLNR…PIKLLLRGKE (85 aa)) enclose the KH-like domain.

Belongs to the TRAFAC class TrmE-Era-EngA-EngB-Septin-like GTPase superfamily. EngA (Der) GTPase family. As to quaternary structure, associates with the 50S ribosomal subunit.

In terms of biological role, GTPase that plays an essential role in the late steps of ribosome biogenesis. The polypeptide is GTPase Der (Persephonella marina (strain DSM 14350 / EX-H1)).